We begin with the raw amino-acid sequence, 445 residues long: Putative H/ACA ribonucleoprotein complex subunit 4 (445 aa).

Residues 1 to 32 (MGKKDKRSKLEGDDLAEAQQKGSFQLPSSNET) are disordered. Polar residues predominate over residues 20–32 (QKGSFQLPSSNET). Aspartate 113 (nucleophile) is an active-site residue. The PUA domain maps to 284-359 (HKRVVVKDSC…VVAKSKRVIM (76 aa)). The tract at residues 386–445 (LDKFGKPNDTTPKSWAKEYVQTSTKKEVKKEETPDEEEEEAPKKKSKKSKKQESSDSDSD) is disordered.

The protein belongs to the pseudouridine synthase TruB family. In terms of assembly, component of the small nucleolar ribonucleoprotein particle containing H/ACA-type snoRNAs (H/ACA snoRNPs).

It is found in the nucleus. The protein resides in the nucleolus. The catalysed reaction is a uridine in RNA = a pseudouridine in RNA. Its function is as follows. Plays a central role in ribosomal RNA processing. Probable catalytic subunit of H/ACA small nucleolar ribonucleoprotein (H/ACA snoRNP) complex, which catalyzes pseudouridylation of rRNA. This involves the isomerization of uridine such that the ribose is subsequently attached to C5, instead of the normal N1. Pseudouridine ('psi') residues may serve to stabilize the conformation of rRNAs. The sequence is that of Putative H/ACA ribonucleoprotein complex subunit 4 from Caenorhabditis elegans.